Here is a 175-residue protein sequence, read N- to C-terminus: Putative adenylate cyclase MJ0240 (175 aa).

The CYTH domain occupies 1–175 (MIEVEIKVKI…RKSYLELRGL (175 aa)). Tyr-37 functions as the Proton acceptor in the catalytic mechanism.

The protein belongs to the adenylyl cyclase CyaB family.

Its subcellular location is the cytoplasm. The enzyme catalyses ATP = 3',5'-cyclic AMP + diphosphate. In terms of biological role, could catalyze the biosynthesis of cyclic AMP (cAMP) from ATP. This is Putative adenylate cyclase MJ0240 from Methanocaldococcus jannaschii (strain ATCC 43067 / DSM 2661 / JAL-1 / JCM 10045 / NBRC 100440) (Methanococcus jannaschii).